The chain runs to 200 residues: MGVEELERKILEDAEKEAEEILEEAKRDAERIREKAEREAEEVRREILDRARREAETRRRREIAQAKLEIRQERLRVKEEYIEKAIERAEEKIRELAEEGRKEYLEFLKRSAIEAVNAISSDEVVLRANENDLMLLDEMLSEIRDETGKDVELGEPVEAVGGVIAESKDGSEAYDNTVDARLRRRRSEIVRRVSETLFGG.

It belongs to the V-ATPase E subunit family. In terms of assembly, has multiple subunits with at least A(3), B(3), C, D, E, F, H, I and proteolipid K(x).

Its subcellular location is the cell membrane. Functionally, component of the A-type ATP synthase that produces ATP from ADP in the presence of a proton gradient across the membrane. This is A-type ATP synthase subunit E from Methanopyrus kandleri (strain AV19 / DSM 6324 / JCM 9639 / NBRC 100938).